The sequence spans 288 residues: Formamidopyrimidine-DNA glycosylase (288 aa).

The Schiff-base intermediate with DNA role is filled by Pro-2. Catalysis depends on Glu-3, which acts as the Proton donor. Lys-59 functions as the Proton donor; for beta-elimination activity in the catalytic mechanism. Residues His-93, Arg-112, and Lys-168 each coordinate DNA. Residues 254–288 (NVYGRGGEPCKRCGAPIKRVVVGGRSTHYCATCQR) form an FPG-type zinc finger. The Proton donor; for delta-elimination activity role is filled by Arg-278.

The protein belongs to the FPG family. As to quaternary structure, monomer. It depends on Zn(2+) as a cofactor.

It catalyses the reaction Hydrolysis of DNA containing ring-opened 7-methylguanine residues, releasing 2,6-diamino-4-hydroxy-5-(N-methyl)formamidopyrimidine.. The enzyme catalyses 2'-deoxyribonucleotide-(2'-deoxyribose 5'-phosphate)-2'-deoxyribonucleotide-DNA = a 3'-end 2'-deoxyribonucleotide-(2,3-dehydro-2,3-deoxyribose 5'-phosphate)-DNA + a 5'-end 5'-phospho-2'-deoxyribonucleoside-DNA + H(+). In terms of biological role, involved in base excision repair of DNA damaged by oxidation or by mutagenic agents. Acts as a DNA glycosylase that recognizes and removes damaged bases. Has a preference for oxidized purines, such as 7,8-dihydro-8-oxoguanine (8-oxoG). Has AP (apurinic/apyrimidinic) lyase activity and introduces nicks in the DNA strand. Cleaves the DNA backbone by beta-delta elimination to generate a single-strand break at the site of the removed base with both 3'- and 5'-phosphates. This Corynebacterium jeikeium (strain K411) protein is Formamidopyrimidine-DNA glycosylase.